Here is a 344-residue protein sequence, read N- to C-terminus: Serine proteinase inhibitor 2 (344 aa).

This sequence belongs to the serpin family. Poxviruses subfamily.

Its subcellular location is the host cytoplasm. Functionally, viral serpin that inhibits both cysteine and serine proteinases involved in the regulation of host inflammatory and apoptosis processes. Major anti-apoptotic protein which inhibits both intrinsic and extrinsic pathways and strongly cleaves host CASP1 and CASP8 but is a rather poor inhibitor of host CASP3. Prevents the proteolytic activity of host interleukin-1-beta converting enzyme (ICE) and ICE-like enzymes. Can also block apoptosis through host tumor necrosis factor (TNF) receptor. The inhibition of host ICE is an example of a 'cross-class' interaction, in which a serpin inhibits a non-serine proteinase. Also inhibits granzyme B. In Homo sapiens (Human), this protein is Serine proteinase inhibitor 2 (OPG199).